We begin with the raw amino-acid sequence, 357 residues long: UDP-N-acetylglucosamine--N-acetylmuramyl-(pentapeptide) pyrophosphoryl-undecaprenol N-acetylglucosamine transferase (357 aa).

UDP-N-acetyl-alpha-D-glucosamine-binding positions include 14-16, N120, R164, S194, and Q291; that span reads TGG.

Belongs to the glycosyltransferase 28 family. MurG subfamily.

It localises to the cell inner membrane. It catalyses the reaction di-trans,octa-cis-undecaprenyl diphospho-N-acetyl-alpha-D-muramoyl-L-alanyl-D-glutamyl-meso-2,6-diaminopimeloyl-D-alanyl-D-alanine + UDP-N-acetyl-alpha-D-glucosamine = di-trans,octa-cis-undecaprenyl diphospho-[N-acetyl-alpha-D-glucosaminyl-(1-&gt;4)]-N-acetyl-alpha-D-muramoyl-L-alanyl-D-glutamyl-meso-2,6-diaminopimeloyl-D-alanyl-D-alanine + UDP + H(+). The protein operates within cell wall biogenesis; peptidoglycan biosynthesis. Functionally, cell wall formation. Catalyzes the transfer of a GlcNAc subunit on undecaprenyl-pyrophosphoryl-MurNAc-pentapeptide (lipid intermediate I) to form undecaprenyl-pyrophosphoryl-MurNAc-(pentapeptide)GlcNAc (lipid intermediate II). This chain is UDP-N-acetylglucosamine--N-acetylmuramyl-(pentapeptide) pyrophosphoryl-undecaprenol N-acetylglucosamine transferase, found in Fusobacterium nucleatum subsp. nucleatum (strain ATCC 25586 / DSM 15643 / BCRC 10681 / CIP 101130 / JCM 8532 / KCTC 2640 / LMG 13131 / VPI 4355).